We begin with the raw amino-acid sequence, 183 residues long: Archaemetzincin (183 aa).

Residue H131 participates in Zn(2+) binding. E132 (proton acceptor) is an active-site residue. Positions 135, 141, 142, 147, 166, and 169 each coordinate Zn(2+).

The protein belongs to the peptidase M54 family. Monomer. The cofactor is Zn(2+).

Functionally, probable zinc metalloprotease whose natural substrate is unknown. The sequence is that of Archaemetzincin from Saccharolobus islandicus (strain L.S.2.15 / Lassen #1) (Sulfolobus islandicus).